A 334-amino-acid chain; its full sequence is UDP-N-acetylglucosamine--N-acetylmuramyl-(pentapeptide) pyrophosphoryl-undecaprenol N-acetylglucosamine transferase (334 aa).

Residues 11–13 (TGG), N125, S185, I229, and Q274 contribute to the UDP-N-acetyl-alpha-D-glucosamine site.

It belongs to the glycosyltransferase 28 family. MurG subfamily.

It localises to the cell inner membrane. It carries out the reaction di-trans,octa-cis-undecaprenyl diphospho-N-acetyl-alpha-D-muramoyl-L-alanyl-D-glutamyl-meso-2,6-diaminopimeloyl-D-alanyl-D-alanine + UDP-N-acetyl-alpha-D-glucosamine = di-trans,octa-cis-undecaprenyl diphospho-[N-acetyl-alpha-D-glucosaminyl-(1-&gt;4)]-N-acetyl-alpha-D-muramoyl-L-alanyl-D-glutamyl-meso-2,6-diaminopimeloyl-D-alanyl-D-alanine + UDP + H(+). It participates in cell wall biogenesis; peptidoglycan biosynthesis. Functionally, cell wall formation. Catalyzes the transfer of a GlcNAc subunit on undecaprenyl-pyrophosphoryl-MurNAc-pentapeptide (lipid intermediate I) to form undecaprenyl-pyrophosphoryl-MurNAc-(pentapeptide)GlcNAc (lipid intermediate II). The polypeptide is UDP-N-acetylglucosamine--N-acetylmuramyl-(pentapeptide) pyrophosphoryl-undecaprenol N-acetylglucosamine transferase (Thermosipho africanus (strain TCF52B)).